The chain runs to 144 residues: Small ribosomal subunit protein bS6 (144 aa).

The disordered stretch occupies residues lysine 92–arginine 144. A compositionally biased stretch (basic and acidic residues) spans valine 93–arginine 144.

Belongs to the bacterial ribosomal protein bS6 family.

Binds together with bS18 to 16S ribosomal RNA. This Rhodobacter capsulatus (strain ATCC BAA-309 / NBRC 16581 / SB1003) protein is Small ribosomal subunit protein bS6 (rpsF).